Reading from the N-terminus, the 261-residue chain is Putative hydro-lyase Nther_1142 (261 aa).

The protein belongs to the D-glutamate cyclase family.

The polypeptide is Putative hydro-lyase Nther_1142 (Natranaerobius thermophilus (strain ATCC BAA-1301 / DSM 18059 / JW/NM-WN-LF)).